The following is a 158-amino-acid chain: 2-C-methyl-D-erythritol 2,4-cyclodiphosphate synthase (158 aa).

A divalent metal cation-binding residues include Asp-8 and His-10. 4-CDP-2-C-methyl-D-erythritol 2-phosphate-binding positions include 8–10 and 34–35; these read DVH and HS. His-42 contributes to the a divalent metal cation binding site. Residues 56-58, 61-65, 100-106, 132-135, Phe-139, and Arg-142 contribute to the 4-CDP-2-C-methyl-D-erythritol 2-phosphate site; these read DIG, FPDTD, AQAPKMA, and TTSE.

The protein belongs to the IspF family. As to quaternary structure, homotrimer. A divalent metal cation serves as cofactor.

The catalysed reaction is 4-CDP-2-C-methyl-D-erythritol 2-phosphate = 2-C-methyl-D-erythritol 2,4-cyclic diphosphate + CMP. The protein operates within isoprenoid biosynthesis; isopentenyl diphosphate biosynthesis via DXP pathway; isopentenyl diphosphate from 1-deoxy-D-xylulose 5-phosphate: step 4/6. Its function is as follows. Involved in the biosynthesis of isopentenyl diphosphate (IPP) and dimethylallyl diphosphate (DMAPP), two major building blocks of isoprenoid compounds. Catalyzes the conversion of 4-diphosphocytidyl-2-C-methyl-D-erythritol 2-phosphate (CDP-ME2P) to 2-C-methyl-D-erythritol 2,4-cyclodiphosphate (ME-CPP) with a corresponding release of cytidine 5-monophosphate (CMP). In Aliivibrio fischeri (strain ATCC 700601 / ES114) (Vibrio fischeri), this protein is 2-C-methyl-D-erythritol 2,4-cyclodiphosphate synthase.